Reading from the N-terminus, the 1770-residue chain is Transposon Ty2-C Gag-Pol polyprotein (1770 aa).

3 stretches are compositionally biased toward polar residues: residues 1 to 11, 19 to 39, and 49 to 60; these read MESQQLHQNPR, ASVTSKEVPSNQDPLAVSASN, and KVNSQQETTPGT. 2 disordered regions span residues 1–88 and 355–453; these read MESQ…YQQH and SQYK…LPDH. The RNA-binding stretch occupies residues 295–397; it reads ENNINVSDRL…SSKPRAAKAH (103 aa). The segment covering 369-382 has biased composition (low complexity); that stretch reads TSPNTTNTKVTTRN. Composition is skewed to polar residues over residues 399-408 and 415-435; these read IATSSKFSRV and ESTVSSQYLSDDNELSLGQQQ. Catalysis depends on Asp457, which acts as the For protease activity; shared with dimeric partner. Positions 579 to 636 are integrase-type zinc finger-like; it reads NVNKSKSVNKYPYPLIHRMLGHANFRSIQKSLKKNAVTYLKESDIEWSNASTYQCPDC. In terms of domain architecture, Integrase catalytic spans 656 to 831; the sequence is ESYEPFQYLH…AGLDITTILP (176 aa). Mg(2+) is bound by residues Asp667 and Asp732. Disordered stretches follow at residues 1003–1038 and 1057–1205; these read EMGGTVESDTTSPRHSSTFTARNQKRPGSPNDMIDL and GGTE…TEIE. Polar residues-rich tracts occupy residues 1009-1024 and 1065-1082; these read ESDTTSPRHSSTFTAR and QRNSDTNIKYRTTNSTPS. Positions 1193 to 1227 match the Bipartite nuclear localization signal motif; sequence KKRSLEDNETEIEVSRDTWNNKNMRSLEPPRSKKR. Residues 1353–1491 form the Reverse transcriptase Ty1/copia-type domain; sequence NDYYITQLDI…DILGLEIKYQ (139 aa). Positions 1361, 1442, 1443, 1625, 1667, and 1700 each coordinate Mg(2+). Residues 1625 to 1767 form the RNase H Ty1/copia-type domain; it reads DASYGNQPYY…IKTFKLLTNK (143 aa).

As to quaternary structure, the capsid protein forms a homotrimer, from which the VLPs are assembled. The protease is a homodimer, whose active site consists of two apposed aspartic acid residues. Initially, virus-like particles (VLPs) are composed of the structural unprocessed proteins Gag and Gag-Pol, and also contain the host initiator methionine tRNA (tRNA(i)-Met) which serves as a primer for minus-strand DNA synthesis, and a dimer of genomic Ty RNA. Processing of the polyproteins occurs within the particle and proceeds by an ordered pathway, called maturation. First, the protease (PR) is released by autocatalytic cleavage of the Gag-Pol polyprotein, and this cleavage is a prerequisite for subsequent processing at the remaining sites to release the mature structural and catalytic proteins. Maturation takes place prior to the RT reaction and is required to produce transposition-competent VLPs.

Its subcellular location is the cytoplasm. The protein localises to the nucleus. It catalyses the reaction DNA(n) + a 2'-deoxyribonucleoside 5'-triphosphate = DNA(n+1) + diphosphate. The enzyme catalyses Endonucleolytic cleavage to 5'-phosphomonoester.. In terms of biological role, capsid protein (CA) is the structural component of the virus-like particle (VLP), forming the shell that encapsulates the retrotransposons dimeric RNA genome. The particles are assembled from trimer-clustered units and there are holes in the capsid shells that allow for the diffusion of macromolecules. CA also has nucleocapsid-like chaperone activity, promoting primer tRNA(i)-Met annealing to the multipartite primer-binding site (PBS), dimerization of Ty2 RNA and initiation of reverse transcription. Its function is as follows. The aspartyl protease (PR) mediates the proteolytic cleavages of the Gag and Gag-Pol polyproteins after assembly of the VLP. Reverse transcriptase/ribonuclease H (RT) is a multifunctional enzyme that catalyzes the conversion of the retro-elements RNA genome into dsDNA within the VLP. The enzyme displays a DNA polymerase activity that can copy either DNA or RNA templates, and a ribonuclease H (RNase H) activity that cleaves the RNA strand of RNA-DNA heteroduplexes during plus-strand synthesis and hydrolyzes RNA primers. The conversion leads to a linear dsDNA copy of the retrotransposon that includes long terminal repeats (LTRs) at both ends. Functionally, integrase (IN) targets the VLP to the nucleus, where a subparticle preintegration complex (PIC) containing at least integrase and the newly synthesized dsDNA copy of the retrotransposon must transit the nuclear membrane. Once in the nucleus, integrase performs the integration of the dsDNA into the host genome. In Saccharomyces cerevisiae (strain ATCC 204508 / S288c) (Baker's yeast), this protein is Transposon Ty2-C Gag-Pol polyprotein (TY2B-C).